The chain runs to 257 residues: BTB/POZ domain-containing protein KCTD1 (257 aa).

The interval 1 to 25 is disordered; sequence MSRPLITRSPASPLNNQGIPTPAQL. Residues Ser-9 and Ser-12 each carry the phosphoserine modification. Over residues 9-25 the composition is skewed to polar residues; that stretch reads SPASPLNNQGIPTPAQL. Positions 30-100 constitute a BTB domain; the sequence is APVHIDVGGH…LRTSKLLIPD (71 aa).

As to quaternary structure, forms homopentamers. Interacts with KCTD15, probably forming heteropentamers depending on its abundance in a cell-type dependent manner. Interacts with TFAP2A, TFAP2B and TFAP2C via the BTB domain. Post-translationally, sumoylated. In terms of tissue distribution, expressed in mammary gland, kidney, brain and ovary.

It localises to the nucleus. May repress the transcriptional activity of AP-2 family members, including TFAP2A, TFAP2B and TFAP2C to various extent. The sequence is that of BTB/POZ domain-containing protein KCTD1 (KCTD1) from Homo sapiens (Human).